Reading from the N-terminus, the 393-residue chain is Ceramide synthase 4 (393 aa).

Topologically, residues 1–31 (MSFSLSEWLWQETYWLPPNVTWAELEDRDGL) are lumenal. A glycan (N-linked (GlcNAc...) asparagine) is linked at Asn19. Residues 32 to 52 (VFAHPHHVLAAFPVALVLVAV) traverse the membrane as a helical segment. The tract at residues 67–128 (WMGVQDPIRR…RRRRNQDRPS (62 aa)) is homeobox-like. A TLC domain is found at 131–332 (KKFCEACWRF…ILRMLYSFLH (202 aa)). Transmembrane regions (helical) follow at residues 140-160 (FVFY…ESWL), 179-199 (LYWW…TLPF), 217-237 (VGLI…VVLL), and 265-285 (FIMF…TQVI). The short motif at 291-301 (DSIKNSGPFFG) is the Last loop motif element. Residues 304–324 (FFIVLLVMLQILHVYWFCLIL) form a helical membrane-spanning segment. The Cytoplasmic portion of the chain corresponds to 325–393 (RMLYSFLHKG…CLTNGHTRAT (69 aa)). The interval 341 to 393 (RSDVEEPDSSDDEPVSEGPQLKNGMARGSRVAVTNGPRSRAAACLTNGHTRAT) is disordered. 3 positions are modified to phosphoserine: Ser342, Ser349, and Ser350. Acidic residues predominate over residues 345-355 (EEPDSSDDEPV).

Phosphorylated at the C-terminus by CK2. In terms of tissue distribution, ubiquitously expressed, with highest levels in skin.

The protein resides in the endoplasmic reticulum membrane. It catalyses the reaction sphinganine + octadecanoyl-CoA = N-(octadecanoyl)-sphinganine + CoA + H(+). It carries out the reaction eicosanoyl-CoA + sphinganine = N-eicosanoylsphinganine + CoA + H(+). The catalysed reaction is docosanoyl-CoA + sphinganine = N-docosanoylsphinganine + CoA + H(+). The enzyme catalyses tetracosanoyl-CoA + sphinganine = N-tetracosanoylsphinganine + CoA + H(+). It catalyses the reaction hexacosanoyl-CoA + sphinganine = N-hexacosanoylsphinganine + CoA + H(+). It carries out the reaction a fatty acyl-CoA + sphing-4-enine = an N-acylsphing-4-enine + CoA + H(+). The catalysed reaction is sphing-4-enine + octadecanoyl-CoA = N-octadecanoylsphing-4-enine + CoA + H(+). The enzyme catalyses hexadecasphinganine + octadecanoyl-CoA = N-octadecanoylhexadecasphinganine + CoA + H(+). Its pathway is lipid metabolism; sphingolipid metabolism. Functionally, ceramide synthase that catalyzes formation of ceramide from sphinganine and acyl-CoA substrates, with high selectivity toward long and very-long chains (C18:0-C22:0) as acyl donor. The chain is Ceramide synthase 4 from Mus musculus (Mouse).